The chain runs to 824 residues: Glycophorin-binding protein 130 (824 aa).

The PEXEL motif motif lies at 84–88; it reads RILAE. 11 disordered regions span residues 97–236, 258–291, 310–334, 358–384, 408–431, 457–482, 507–532, 559–582, 659–683, 711–733, and 759–783; these read EKTT…GQIM, NTDP…EYAS, DPND…PEGQ, NTDP…PEGQ, NTDP…SDPE, NTDP…DPEG, DPND…DPEG, and NDEV…PEGQ. 2 stretches are compositionally biased toward basic and acidic residues: residues 117 to 140 and 174 to 198; these read TKKD…SEKQ and KKEE…EPKA. Polar residues predominate over residues 200 to 228; the sequence is KVSQKPSTSTRSNNEVKIRAASNQETLTS. GBP repeat units lie at residues 226–275, 276–325, 326–375, 376–424, 425–474, 475–524, 525–574, 575–624, 625–674, 675–724, 725–774, and 775–824; these read LTSA…NKED, LTSA…DNKE, LTSS…NKED, LTSA…NKEE, and LTSA…NNEA. Composition is skewed to basic and acidic residues over residues 264 to 276, 314 to 326, 364 to 376, 414 to 426, 463 to 475, 513 to 525, 563 to 575, 663 to 675, 713 to 725, and 763 to 775; these read EVER…KEDL, DVER…KEDL, and EVER…KELT.

Interacts with host glycophorin.

Its subcellular location is the secreted. It localises to the cell surface. The protein localises to the host cytoplasm. Its function is as follows. Involved in merozoite invasion of host erythrocytes. The sequence is that of Glycophorin-binding protein 130 from Plasmodium falciparum (isolate 3D7).